Reading from the N-terminus, the 106-residue chain is Iron-sulfur cluster assembly protein CyaY (106 aa).

The protein belongs to the frataxin family.

Involved in iron-sulfur (Fe-S) cluster assembly. May act as a regulator of Fe-S biogenesis. This chain is Iron-sulfur cluster assembly protein CyaY, found in Salmonella agona (strain SL483).